The chain runs to 341 residues: Phosphoribosylformylglycinamidine cyclo-ligase (341 aa).

This sequence belongs to the AIR synthase family.

Its subcellular location is the cytoplasm. It catalyses the reaction 2-formamido-N(1)-(5-O-phospho-beta-D-ribosyl)acetamidine + ATP = 5-amino-1-(5-phospho-beta-D-ribosyl)imidazole + ADP + phosphate + H(+). It participates in purine metabolism; IMP biosynthesis via de novo pathway; 5-amino-1-(5-phospho-D-ribosyl)imidazole from N(2)-formyl-N(1)-(5-phospho-D-ribosyl)glycinamide: step 2/2. The protein is Phosphoribosylformylglycinamidine cyclo-ligase of Agathobacter rectalis (strain ATCC 33656 / DSM 3377 / JCM 17463 / KCTC 5835 / VPI 0990) (Eubacterium rectale).